Consider the following 350-residue polypeptide: Protein-glutamate methylesterase/protein-glutamine glutaminase (350 aa).

In terms of domain architecture, Response regulatory spans 5-122 (RVLCVDDSAL…REGMLAYSEL (118 aa)). A 4-aspartylphosphate modification is found at aspartate 56. In terms of domain architecture, CheB-type methylesterase spans 153–345 (LLSSEKLIAI…QRMLAQISAG (193 aa)). Residues serine 165, histidine 191, and aspartate 287 contribute to the active site.

The protein belongs to the CheB family. Phosphorylated by CheA. Phosphorylation of the N-terminal regulatory domain activates the methylesterase activity.

Its subcellular location is the cytoplasm. The enzyme catalyses [protein]-L-glutamate 5-O-methyl ester + H2O = L-glutamyl-[protein] + methanol + H(+). The catalysed reaction is L-glutaminyl-[protein] + H2O = L-glutamyl-[protein] + NH4(+). Involved in chemotaxis. Part of a chemotaxis signal transduction system that modulates chemotaxis in response to various stimuli. Catalyzes the demethylation of specific methylglutamate residues introduced into the chemoreceptors (methyl-accepting chemotaxis proteins or MCP) by CheR. Also mediates the irreversible deamidation of specific glutamine residues to glutamic acid. Does not interact with the C-terminal pentapeptide of the chemoreceptors. This chain is Protein-glutamate methylesterase/protein-glutamine glutaminase, found in Pectobacterium atrosepticum (strain SCRI 1043 / ATCC BAA-672) (Erwinia carotovora subsp. atroseptica).